The sequence spans 249 residues: 3-deoxy-D-manno-octulosonic acid kinase (249 aa).

Asp-175 is an active-site residue.

This sequence belongs to the protein kinase superfamily. KdkA/RfaP family.

The protein localises to the cell inner membrane. It catalyses the reaction an alpha-Kdo-(2-&gt;6)-lipid IVA + ATP = a 4-O-phospho-alpha-Kdo-(2-&gt;6)-lipid IVA + ADP + H(+). It participates in bacterial outer membrane biogenesis; LPS core biosynthesis. Its function is as follows. Catalyzes the ATP-dependent phosphorylation of the 3-deoxy-D-manno-octulosonic acid (Kdo) residue in Kdo-lipid IV(A) at the 4-OH position. The sequence is that of 3-deoxy-D-manno-octulosonic acid kinase from Stenotrophomonas maltophilia (strain K279a).